The sequence spans 303 residues: Coenzyme PQQ synthesis protein B (303 aa).

The protein belongs to the PqqB family.

Its pathway is cofactor biosynthesis; pyrroloquinoline quinone biosynthesis. Functionally, may be involved in the transport of PQQ or its precursor to the periplasm. The protein is Coenzyme PQQ synthesis protein B of Pseudomonas entomophila (strain L48).